Consider the following 625-residue polypeptide: MAU2 chromatid cohesion factor homolog (625 aa).

TPR repeat units follow at residues 96–129 (FDTA…SQNN), 451–484 (GGFY…ANAE), and 491–524 (SCSL…ASKI). Over residues 600 to 611 (TVPTTETSTSAL) the composition is skewed to polar residues. A disordered region spans residues 600–625 (TVPTTETSTSALQQPQQPAAQFGQFY). The span at 612-625 (QQPQQPAAQFGQFY) shows a compositional bias: low complexity.

This sequence belongs to the SCC4/mau-2 family. As to quaternary structure, interacts with Nipped-B to form the cohesin loading complex.

The protein localises to the nucleus. The protein resides in the nucleoplasm. Required for association of the cohesin complex with chromatin during interphase. Plays a role in sister chromatid cohesion and normal progression through prometaphase. This chain is MAU2 chromatid cohesion factor homolog, found in Drosophila mojavensis (Fruit fly).